A 211-amino-acid chain; its full sequence is SOSS complex subunit B2 (211 aa).

Residues 27 to 97 (IVLEIGRVTK…TLYTGRGGDL (71 aa)) constitute a DNA-binding region (OB). Residues 125 to 211 (NQQNKTSKEQ…GRDPRRASKR (87 aa)) form a disordered region. Over residues 136–157 (GNSPPNQNAGNGTVPVFSNNNA) the composition is skewed to polar residues. The segment covering 179–195 (NGPPPVTAGGTPAPPKP) has biased composition (pro residues).

It belongs to the SOSS-B family. SOSS-B2 subfamily. As to quaternary structure, component of the SOSS complex, composed of soss-b (soss-b1/nabp2 or soss-b2/nabp1), soss-a/ints3 and soss-c/inip. SOSS complexes containing soss-b1/nabp2 are more abundant than complexes containing soss-b2/nabp1.

It is found in the nucleus. Functionally, component of the SOSS complex, a multiprotein complex that functions downstream of the MRN complex to promote DNA repair and G2/M checkpoint. In the SOSS complex, acts as a sensor of single-stranded DNA that binds to single-stranded DNA. The SOSS complex associates with DNA lesions and influences diverse endpoints in the cellular DNA damage response including cell-cycle checkpoint activation, recombinational repair and maintenance of genomic stability. Required for efficient homologous recombination-dependent repair of double-strand breaks (DSBs). The chain is SOSS complex subunit B2 (nabp1) from Danio rerio (Zebrafish).